A 77-amino-acid polypeptide reads, in one-letter code: Translation initiation factor IF-1, chloroplastic (77 aa).

Positions 1–71 (MKEQKLIHEG…TRGRIIYRLR (71 aa)) constitute an S1-like domain.

The protein belongs to the IF-1 family. In terms of assembly, component of the 30S ribosomal translation pre-initiation complex which assembles on the 30S ribosome in the order IF-2 and IF-3, IF-1 and N-formylmethionyl-tRNA(fMet); mRNA recruitment can occur at any time during PIC assembly.

The protein localises to the plastid. It localises to the chloroplast. Functionally, one of the essential components for the initiation of protein synthesis. Stabilizes the binding of IF-2 and IF-3 on the 30S subunit to which N-formylmethionyl-tRNA(fMet) subsequently binds. Helps modulate mRNA selection, yielding the 30S pre-initiation complex (PIC). Upon addition of the 50S ribosomal subunit IF-1, IF-2 and IF-3 are released leaving the mature 70S translation initiation complex. This chain is Translation initiation factor IF-1, chloroplastic, found in Asarum canadense (Wild ginger).